Consider the following 366-residue polypeptide: Histidinol-phosphate aminotransferase (366 aa).

Lysine 231 bears the N6-(pyridoxal phosphate)lysine mark.

The protein belongs to the class-II pyridoxal-phosphate-dependent aminotransferase family. Histidinol-phosphate aminotransferase subfamily. Requires pyridoxal 5'-phosphate as cofactor.

The enzyme catalyses L-histidinol phosphate + 2-oxoglutarate = 3-(imidazol-4-yl)-2-oxopropyl phosphate + L-glutamate. It participates in amino-acid biosynthesis; L-histidine biosynthesis; L-histidine from 5-phospho-alpha-D-ribose 1-diphosphate: step 7/9. The protein is Histidinol-phosphate aminotransferase of Halobacterium salinarum (strain ATCC 29341 / DSM 671 / R1).